The chain runs to 1041 residues: Beta-galactosidase (1041 aa).

Positions 103 and 201 each coordinate substrate. D201 is a Na(+) binding site. 3 residues coordinate Mg(2+): E415, H417, and E460. Residues E460 and 536 to 539 (EYAH) contribute to the substrate site. The Proton donor role is filled by E460. Residue E536 is the Nucleophile of the active site. N596 is a binding site for Mg(2+). Residues F600 and N603 each coordinate Na(+). The substrate site is built by N603 and W1016.

The protein belongs to the glycosyl hydrolase 2 family. Homotetramer. Mg(2+) is required as a cofactor. The cofactor is Na(+).

It catalyses the reaction Hydrolysis of terminal non-reducing beta-D-galactose residues in beta-D-galactosides.. The protein is Beta-galactosidase of Alteromonas mediterranea (strain DSM 17117 / CIP 110805 / LMG 28347 / Deep ecotype).